Reading from the N-terminus, the 853-residue chain is Leucine--tRNA ligase (853 aa).

The 'HIGH' region signature appears at 42–52; it reads PYPSGNLHMGH. Residues 615–619 carry the 'KMSKS' region motif; that stretch reads KMSKS. An ATP-binding site is contributed by lysine 618.

This sequence belongs to the class-I aminoacyl-tRNA synthetase family.

The protein resides in the cytoplasm. The enzyme catalyses tRNA(Leu) + L-leucine + ATP = L-leucyl-tRNA(Leu) + AMP + diphosphate. The sequence is that of Leucine--tRNA ligase from Crocosphaera subtropica (strain ATCC 51142 / BH68) (Cyanothece sp. (strain ATCC 51142)).